Reading from the N-terminus, the 549-residue chain is Polynucleotide 5'-hydroxyl-kinase nol-9 (549 aa).

G190–S197 serves as a coordination point for ATP.

This sequence belongs to the Clp1 family. NOL9/GRC3 subfamily.

The protein localises to the nucleus. The protein resides in the nucleolus. Polynucleotide 5'-kinase involved in rRNA processing. The chain is Polynucleotide 5'-hydroxyl-kinase nol-9 (nol-9) from Caenorhabditis elegans.